The following is a 429-amino-acid chain: tRNA (guanine(9)-N1)-methyltransferase (429 aa).

The region spanning 131–379 (KERKEAQRRI…AVIPIRKYAP (249 aa)) is the SAM-dependent MTase TRM10-type domain. S-adenosyl-L-methionine is bound by residues 285 to 286 (LS), glycine 305, 309 to 313 (DRNRH), cysteine 317, leucine 331, and 344 to 346 (KAL). The active-site Proton acceptor is aspartate 309. The tract at residues 383-429 (AKRAKTETKRNEKVEEEVECTSAEGEEDIGVIEESAEVDPEDVFSNQ) is disordered. Basic and acidic residues predominate over residues 386–395 (AKTETKRNEK). Positions 396-429 (VEEEVECTSAEGEEDIGVIEESAEVDPEDVFSNQ) are enriched in acidic residues.

It belongs to the class IV-like SAM-binding methyltransferase superfamily. TRM10 family. In terms of assembly, monomer.

The protein resides in the cytoplasm. The protein localises to the nucleus. The enzyme catalyses guanosine(9) in tRNA + S-adenosyl-L-methionine = N(1)-methylguanosine(9) in tRNA + S-adenosyl-L-homocysteine + H(+). In terms of biological role, S-adenosyl-L-methionine-dependent guanine N(1)-methyltransferase that catalyzes the formation of N(1)-methylguanine at position 9 (m1G9) in cytoplasmic tRNA. This Cryptococcus neoformans var. neoformans serotype D (strain B-3501A) (Filobasidiella neoformans) protein is tRNA (guanine(9)-N1)-methyltransferase.